The following is a 238-amino-acid chain: Oxidoreductase dmxR7 (238 aa).

This sequence belongs to the avfA family.

The protein operates within secondary metabolite biosynthesis. In terms of biological role, oxidoreductase; part of the gene cluster that mediates the biosynthesis of the dimeric xanthones cryptosporioptides. The pathway begins with the synthesis of atrochrysone thioester by the polyketide synthase dmx-nrPKS. The atrochrysone carboxyl ACP thioesterase dmxR1 then breaks the thioester bond and releases the atrochrysone carboxylic acid from dmx-nrPKS. Atrochrysone carboxylic acid is decarboxylated by the decarboxylase dmxR15, and oxidized by the anthrone oxygenase dmxR16 to yield emodin. Emodin is then reduced to emodin hydroquinone by the oxidoreductase dmxR7. A-ring reduction by the short chain dehydrogenase dmxR18, dehydration by the scytalone dehydratase-like protein dmxR17 and probable spontaneous re-oxidation, results in overall deoxygenation to chrysophanol. Baeyer-Villiger oxidation by the Baeyer-Villiger monooxygenase (BVMO) dmxR6 then yields monodictylactone in equilibrium with monodictyphenone. In the case of the cryptosporioptides biosynthesis, monodictylactone is reduced at C-12 to an alcohol (by the short chain dehydrogenases dmxR12 or dmxR8) and hydroxylated at C-5 by dmxR9, yielding the electron-rich aromatic which could eliminate H(2)O to form the ortho-quinonemethide, followed by tautomerisation to paraquinone and complete the formal reduction to produce the 10-methylgroup. Conjugate addition of C-4a-OH to the resulting paraquinone by the monooxygenase dmxR10 then gives cyclohexadienone, which is then reduced at C-5 by the short chain dehydrogenase dmxR3 to give the dihydroxanthone. The 6,7-epoxide in the cryptosporioptides could be introduced by the cytochrome P450 monooxygenase dmxL3. The highly reducing PKS dmxL2 manufactures butyrate, which is further carboxylated by dmxL1 to form ethylmalonate. It is not yet clear whether the carboxylation occurs while the butyrate is attached to the ACP of dmxL2, but this unusual fungal metabolite could then be esterified to O-5 by the O-acetyltransferase dmxR13. Finally, dimerization performed by dmxR5 gives the observed dimers cryptosporioptides A, B and C as the final products of the pathway. This Cryptosporiopsis sp. (strain 8999) protein is Oxidoreductase dmxR7.